Here is a 452-residue protein sequence, read N- to C-terminus: Molybdate-anion transporter (452 aa).

Transmembrane regions (helical) follow at residues 1 to 21 (MLLT…VLEF), 45 to 65 (YDFY…GPYL), 79 to 99 (IAII…VSAP), 130 to 150 (FVLI…FSSF), 180 to 200 (NGGI…WLGL), 201 to 221 (GPAS…ALVI), 251 to 271 (VLLL…FIFL), 281 to 301 (TPLG…SSLY), 316 to 336 (VLCL…FSTA), 346 to 366 (LLAF…MGFL), 377 to 397 (IGVL…GLLV), and 410 to 430 (MFSL…SLFT).

This sequence belongs to the major facilitator superfamily.

It is found in the cell membrane. Functionally, mediates high-affinity intracellular uptake of the rare oligo-element molybdenum. The chain is Molybdate-anion transporter (mfsd5) from Xenopus tropicalis (Western clawed frog).